The following is a 473-amino-acid chain: Azaphilone pigments biosynthesis cluster protein L (473 aa).

Positions 1–23 are cleaved as a signal peptide; sequence MAELSIASGIVGLLSLGIQVTQS. ANK repeat units lie at residues 403–432 and 436–465; these read EYGN…DVNA and RYGN…NVST. Residue N462 is glycosylated (N-linked (GlcNAc...) asparagine).

Its function is as follows. Part of the gene cluster that mediates the biosynthesis of azaphilone pigments (MonAzPs), a complex mixture of compounds with a common azaphilone skeleton very widely used as food colorants. Seems not to play a direct role in the biosynthesis but might have a regulatorx function. This Monascus ruber (Mold) protein is Azaphilone pigments biosynthesis cluster protein L.